Consider the following 245-residue polypeptide: MATPTGETQPAKHQEVGHKSLLQSDALYQYILETSVYPREPQPMKELRRITAKHPWNLMTTSADEGQFLNLLLKLINAKNTMEIGVYTGYSLLSTALALPEDGKILALDINRENYEIGLPIIQKAGVAHKIDFREGPALPLLDQMLQDEKCHGSFDFIFVDADKDNYLNYHKRLIDLVKFGGVIGYDNTLWNGSLVAPADAPLRKYVRYYRDFVLELNKALAVDPRVEICQLPVGDGITLCRRIS.

Lys19 lines the substrate pocket. Residues Thr61, Glu83, 85 to 86 (GV), Ser91, Asp109, and Ala138 contribute to the S-adenosyl-L-methionine site. Asp161 provides a ligand contact to substrate. Residue Asp161 coordinates a divalent metal cation. An S-adenosyl-L-methionine-binding site is contributed by Asp163. A divalent metal cation contacts are provided by Asp187 and Asn188. A substrate-binding site is contributed by Asn192.

Belongs to the class I-like SAM-binding methyltransferase superfamily. Cation-dependent O-methyltransferase family. CCoAMT subfamily. A divalent metal cation serves as cofactor.

The catalysed reaction is (E)-caffeoyl-CoA + S-adenosyl-L-methionine = (E)-feruloyl-CoA + S-adenosyl-L-homocysteine + H(+). Its pathway is aromatic compound metabolism; phenylpropanoid biosynthesis. Functionally, methylates caffeoyl-CoA to feruloyl-CoA and 5-hydroxyferuloyl-CoA to sinapoyl-CoA. Plays a role in the synthesis of feruloylated polysaccharides. Involved in the reinforcement of the plant cell wall. Also involved in the responding to wounding or pathogen challenge by the increased formation of cell wall-bound ferulic acid polymers. The sequence is that of Caffeoyl-CoA O-methyltransferase (CCOAOMT) from Zinnia elegans (Garden zinnia).